A 67-amino-acid chain; its full sequence is Protein AaeX (67 aa).

Helical transmembrane passes span L3 to L23 and F43 to S63.

Belongs to the AaeX family.

The protein localises to the cell membrane. The protein is Protein AaeX of Enterobacter sp. (strain 638).